The primary structure comprises 52 residues: Large ribosomal subunit protein bL32c (52 aa).

This sequence belongs to the bacterial ribosomal protein bL32 family.

The protein resides in the plastid. It is found in the chloroplast. This Aethionema grandiflorum (Persian stone-cress) protein is Large ribosomal subunit protein bL32c.